The primary structure comprises 147 residues: UPF0251 protein NT01CX_1491 (147 aa).

Belongs to the UPF0251 family.

This Clostridium novyi (strain NT) protein is UPF0251 protein NT01CX_1491.